The primary structure comprises 163 residues: Large ribosomal subunit protein uL10 (163 aa).

Belongs to the universal ribosomal protein uL10 family. In terms of assembly, part of the ribosomal stalk of the 50S ribosomal subunit. The N-terminus interacts with L11 and the large rRNA to form the base of the stalk. The C-terminus forms an elongated spine to which L12 dimers bind in a sequential fashion forming a multimeric L10(L12)X complex.

Forms part of the ribosomal stalk, playing a central role in the interaction of the ribosome with GTP-bound translation factors. In Actinobacillus pleuropneumoniae serotype 5b (strain L20), this protein is Large ribosomal subunit protein uL10.